We begin with the raw amino-acid sequence, 153 residues long: Inner membrane protein YjiG (153 aa).

Topologically, residues 1 to 31 (MTTQVRKNVMDMFIDGARRGFTIATTNLLPN) are periplasmic. Residues 32–52 (VVMAFVIIQALKITGLLDWVG) traverse the membrane as a helical segment. The Cytoplasmic segment spans residues 53 to 68 (HICEPVMALWGLPGEA). 2 helical membrane-spanning segments follow: residues 69–89 (ATVLLAALMSMGGAVGVAASL) and 90–110 (ATAGALTGHDVTVLLPAMYLM). Over 111–132 (GNPVQNVGRCLGTAEVNAKYYP) the chain is Cytoplasmic. Residues 133-153 (HIITVCVINALLSIWVMQLIV) form a helical membrane-spanning segment.

This sequence belongs to the SpmB family.

Its subcellular location is the cell inner membrane. This is Inner membrane protein YjiG (yjiG) from Escherichia coli O157:H7.